Consider the following 126-residue polypeptide: uncharacterized protein (126 aa).

This is an uncharacterized protein from Escherichia coli (strain K12).